Consider the following 729-residue polypeptide: Catalase-peroxidase (729 aa).

Residues 1–20 (MHNGSNGSVEQRDSMPETSR) form a disordered region. Residues 10 to 20 (EQRDSMPETSR) show a composition bias toward basic and acidic residues. The tryptophyl-tyrosyl-methioninium (Trp-Tyr) (with M-240) cross-link spans 91-214 (WHAAGTYRTT…LGATVMGLIY (124 aa)). H92 acts as the Proton acceptor in catalysis. A cross-link (tryptophyl-tyrosyl-methioninium (Tyr-Met) (with W-91)) is located at residues 214–240 (YVNPEGPESTPDPEWSAQRIRKSFGRM). H255 lines the heme b pocket.

Belongs to the peroxidase family. Peroxidase/catalase subfamily. In terms of assembly, homodimer or homotetramer. Heme b serves as cofactor. Post-translationally, formation of the three residue Trp-Tyr-Met cross-link is important for the catalase, but not the peroxidase activity of the enzyme.

The enzyme catalyses H2O2 + AH2 = A + 2 H2O. It carries out the reaction 2 H2O2 = O2 + 2 H2O. In terms of biological role, bifunctional enzyme with both catalase and broad-spectrum peroxidase activity. The sequence is that of Catalase-peroxidase from Salinibacter ruber (strain DSM 13855 / M31).